A 237-amino-acid chain; its full sequence is Protein FEV (237 aa).

The segment at residues 47–127 is a DNA-binding region (ETS); that stretch reads IQLWQFLLEL…HGKRYAYRFD (81 aa). The interval 129–237 is may mediate active transcriptional repression; that stretch reads QGLAQACQPP…AASHLGGHYH (109 aa).

It belongs to the ETS family. Expressed in central serotonergic neurons.

The protein localises to the nucleus. Functions as a transcriptional regulator. May function as a transcriptional repressor. Functions in the differentiation and the maintenance of the central serotonergic neurons. May play a role in cell growth. The sequence is that of Protein FEV (Fev) from Mus musculus (Mouse).